Here is a 225-residue protein sequence, read N- to C-terminus: Ribosomal RNA large subunit methyltransferase E (225 aa).

5 residues coordinate S-adenosyl-L-methionine: glycine 76, tryptophan 78, aspartate 99, aspartate 115, and aspartate 139. Lysine 179 (proton acceptor) is an active-site residue.

Belongs to the class I-like SAM-binding methyltransferase superfamily. RNA methyltransferase RlmE family.

The protein resides in the cytoplasm. It catalyses the reaction uridine(2552) in 23S rRNA + S-adenosyl-L-methionine = 2'-O-methyluridine(2552) in 23S rRNA + S-adenosyl-L-homocysteine + H(+). Functionally, specifically methylates the uridine in position 2552 of 23S rRNA at the 2'-O position of the ribose in the fully assembled 50S ribosomal subunit. This chain is Ribosomal RNA large subunit methyltransferase E, found in Afipia carboxidovorans (strain ATCC 49405 / DSM 1227 / KCTC 32145 / OM5) (Oligotropha carboxidovorans).